A 277-amino-acid polypeptide reads, in one-letter code: Movement protein (277 aa).

Belongs to the cucumovirus movement protein family.

It localises to the host cell junction. Its subcellular location is the host plasmodesma. Transports viral genome to neighboring plant cells directly through plasmosdesmata, without any budding. The movement protein allows efficient cell to cell propagation, by bypassing the host cell wall barrier. Acts by forming a tubular structure at the host plasmodesmata, enlarging it enough to allow free passage of virion capsids. The protein is Movement protein of Canna (Florist's daisy).